The sequence spans 171 residues: 3-hydroxydecanoyl-[acyl-carrier-protein] dehydratase (171 aa).

His-70 is an active-site residue.

The protein belongs to the thioester dehydratase family. FabA subfamily. Homodimer.

The protein resides in the cytoplasm. It catalyses the reaction a (3R)-hydroxyacyl-[ACP] = a (2E)-enoyl-[ACP] + H2O. The enzyme catalyses (3R)-hydroxydecanoyl-[ACP] = (2E)-decenoyl-[ACP] + H2O. It carries out the reaction (2E)-decenoyl-[ACP] = (3Z)-decenoyl-[ACP]. Its pathway is lipid metabolism; fatty acid biosynthesis. In terms of biological role, necessary for the introduction of cis unsaturation into fatty acids. Catalyzes the dehydration of (3R)-3-hydroxydecanoyl-ACP to E-(2)-decenoyl-ACP and then its isomerization to Z-(3)-decenoyl-ACP. Can catalyze the dehydratase reaction for beta-hydroxyacyl-ACPs with saturated chain lengths up to 16:0, being most active on intermediate chain length. The protein is 3-hydroxydecanoyl-[acyl-carrier-protein] dehydratase of Pseudomonas putida (strain ATCC 700007 / DSM 6899 / JCM 31910 / BCRC 17059 / LMG 24140 / F1).